A 250-amino-acid chain; its full sequence is Ubiquinone/menaquinone biosynthesis C-methyltransferase UbiE (250 aa).

S-adenosyl-L-methionine is bound by residues Ser73, Asp94, and 122 to 123 (NA).

It belongs to the class I-like SAM-binding methyltransferase superfamily. MenG/UbiE family.

It carries out the reaction a 2-demethylmenaquinol + S-adenosyl-L-methionine = a menaquinol + S-adenosyl-L-homocysteine + H(+). The catalysed reaction is a 2-methoxy-6-(all-trans-polyprenyl)benzene-1,4-diol + S-adenosyl-L-methionine = a 5-methoxy-2-methyl-3-(all-trans-polyprenyl)benzene-1,4-diol + S-adenosyl-L-homocysteine + H(+). The protein operates within quinol/quinone metabolism; menaquinone biosynthesis; menaquinol from 1,4-dihydroxy-2-naphthoate: step 2/2. It participates in cofactor biosynthesis; ubiquinone biosynthesis. Functionally, methyltransferase required for the conversion of demethylmenaquinol (DMKH2) to menaquinol (MKH2) and the conversion of 2-polyprenyl-6-methoxy-1,4-benzoquinol (DDMQH2) to 2-polyprenyl-3-methyl-6-methoxy-1,4-benzoquinol (DMQH2). This chain is Ubiquinone/menaquinone biosynthesis C-methyltransferase UbiE, found in Legionella pneumophila (strain Paris).